The primary structure comprises 232 residues: Large ribosomal subunit protein uL1 (232 aa).

Belongs to the universal ribosomal protein uL1 family. Part of the 50S ribosomal subunit.

Functionally, binds directly to 23S rRNA. The L1 stalk is quite mobile in the ribosome, and is involved in E site tRNA release. Protein L1 is also a translational repressor protein, it controls the translation of the L11 operon by binding to its mRNA. This is Large ribosomal subunit protein uL1 from Coxiella burnetii (strain RSA 331 / Henzerling II).